We begin with the raw amino-acid sequence, 802 residues long: DNA mismatch repair protein MutS (802 aa).

617–624 (GPNMGGKS) contributes to the ATP binding site.

Belongs to the DNA mismatch repair MutS family.

Functionally, this protein is involved in the repair of mismatches in DNA. It is possible that it carries out the mismatch recognition step. This protein has a weak ATPase activity. In Buchnera aphidicola subsp. Acyrthosiphon pisum (strain Tuc7), this protein is DNA mismatch repair protein MutS.